The sequence spans 259 residues: UBX domain-containing protein 2A (259 aa).

The segment at 1 to 151 is required for interaction with CHRNA3; sequence MKDVDNLKSI…SATPKIVSKA (151 aa). The segment at 1-164 is required for inhibition of CHRNA3 ubiquitination and translocation of CHRNA3 to the plasma membrane resulting in an increase in acetylcholine-gated nicotinic acetylcholine receptor currents; sequence MKDVDNLKSI…EVENKNNLSA (164 aa). In terms of domain architecture, SEP spans 60-124; sequence QVDVNIKLWK…VEDKKNEICL (65 aa). The tract at residues 167 to 259 is required for interaction with VCP; sequence LNNLEPITNI…TASFRELSEH (93 aa). The region spanning 169–246 is the UBX domain; it reads NLEPITNIQI…DLQNAVIIQR (78 aa).

As to quaternary structure, part of a complex composed of STUB1/CHIP, VCP/p97, CHRNA3, and UBXN2A that modulates the ubiquitination and endoplasmic reticulum-associated degradation (ERAD) of CHRNA3. Within the complex UBXN2A acts as a scaffold protein required for the interaction of CHRNA3 with VCP/p97, this interaction also inhibits CHRNA3 ubiquitination by STUB1/CHIP and subsequently ERAD. Interacts (via SEP domain) with CHRNA3 and interacts (via UBX domain) with VCP/P97; these interactions are required for the interaction of CHRNA3 with the STUB1-VCP-UBXN2A complex. Interacts with HSPA9/MOT-2 (via SBD domain); the interaction inhibits HSPA9/MOT-2 interaction with and degradation of p53, thereby promotes p53 translocation to the nucleus. Interacts with RICTOR. Post-translationally, ubiquitinated. In terms of tissue distribution, expressed in the colon (at protein level).

The protein localises to the golgi apparatus. The protein resides in the endoplasmic reticulum. It is found in the perikaryon. Its subcellular location is the cell projection. It localises to the dendrite. The protein localises to the nucleus. The protein resides in the cytoplasm. Its function is as follows. Acts to repress the ubiquitination and subsequent endoplasmic reticulum-associated degradation of CHRNA3 by the STUB1-VCP-UBXN2A complex in cortical neurons. Also acts to promote the translocation of CHRNA3 to the plasma membrane and subsequently increases plasma membrane acetylcholine-gated ion-channel activation. Plays a role in the inhibition of STUB1-mediated TP53 degradation, via its interaction with HSPA9 which acts to inhibit TP53 binding to HSPA9. Positively mediates the ubiquitination and proteosomal degradation of RICTOR, may thereby act as a negative regulator of the mTORC2 pathway. This chain is UBX domain-containing protein 2A, found in Homo sapiens (Human).